A 269-amino-acid polypeptide reads, in one-letter code: Phosphate import ATP-binding protein PstB 2 (269 aa).

In terms of domain architecture, ABC transporter spans L23–V264. G55–S62 is an ATP binding site.

Belongs to the ABC transporter superfamily. Phosphate importer (TC 3.A.1.7) family. The complex is composed of two ATP-binding proteins (PstB), two transmembrane proteins (PstC and PstA) and a solute-binding protein (PstS).

It is found in the cell membrane. It catalyses the reaction phosphate(out) + ATP + H2O = ADP + 2 phosphate(in) + H(+). Part of the ABC transporter complex PstSACB involved in phosphate import. Responsible for energy coupling to the transport system. This Enterococcus faecalis (strain ATCC 700802 / V583) protein is Phosphate import ATP-binding protein PstB 2.